A 570-amino-acid polypeptide reads, in one-letter code: Pyruvate decarboxylase (570 aa).

Residues M1–V2 constitute a propeptide, removed in mature form. 2 residues coordinate substrate: D33 and H120. The interval D394–I476 is thiamine pyrophosphate binding. Mg(2+)-binding residues include D444, N471, and G473. E477 is a binding site for substrate.

The protein belongs to the TPP enzyme family. As to quaternary structure, homomer. A metal cation serves as cofactor. Requires thiamine diphosphate as cofactor.

It is found in the cytoplasm. The enzyme catalyses a 2-oxocarboxylate + H(+) = an aldehyde + CO2. It functions in the pathway carbohydrate metabolism; pyruvate metabolism. The protein is Pyruvate decarboxylase (cfp) of Neurospora crassa (strain ATCC 24698 / 74-OR23-1A / CBS 708.71 / DSM 1257 / FGSC 987).